The following is a 245-amino-acid chain: 1-(5-phosphoribosyl)-5-[(5-phosphoribosylamino)methylideneamino] imidazole-4-carboxamide isomerase (245 aa).

Asp7 (proton acceptor) is an active-site residue. Catalysis depends on Asp129, which acts as the Proton donor.

Belongs to the HisA/HisF family.

It localises to the cytoplasm. The catalysed reaction is 1-(5-phospho-beta-D-ribosyl)-5-[(5-phospho-beta-D-ribosylamino)methylideneamino]imidazole-4-carboxamide = 5-[(5-phospho-1-deoxy-D-ribulos-1-ylimino)methylamino]-1-(5-phospho-beta-D-ribosyl)imidazole-4-carboxamide. The protein operates within amino-acid biosynthesis; L-histidine biosynthesis; L-histidine from 5-phospho-alpha-D-ribose 1-diphosphate: step 4/9. The polypeptide is 1-(5-phosphoribosyl)-5-[(5-phosphoribosylamino)methylideneamino] imidazole-4-carboxamide isomerase (Salmonella choleraesuis (strain SC-B67)).